The primary structure comprises 718 residues: MIYQGESIRVDFIEPGFAELQFDAKGSVNKFDQATLEEFSEALTKLQNTDDLRGVIVTSSKSTFIVGADITEFLTLFSDQEKTRSWVAKASRVFDQLEDLPVPTVGAVTGFALGGGCEALLACDYRVADTTATIGLPEVKLGLIPGFGGTMRLPRVIGPDNALEWITTGKNNKALDALKVGAVDAVVEPENLTKAALNLAKAAAAGQQDWKAKRQPKLEPLKANDTELMMTLVTAKGMIAAKAGKHYPAPHKALEAIENGAREHREGALTAENNAFFDLTQTEACQAQVGIFLADQAVKGKSKKYAKAATKEIKTAGVLGAGIMGGGIAYQSALKGVPAVMKDIKQDALDLGMKEAGKILKKGVERGKVNNEKMIKILSSITPTLLNDAVKDVDIVVEAVVENPKVKGSVLAEIEGVIGDDAILTSNTSTISITELAKNLKRPEKFCGMHFFNPVHKMPLVEIIRGEKTSDDTVNAVVAYALKLGKTPIVVNDCPGFLVNRVLFPYLAGFAGMVDEGVDFVGIDKVMEKQFGWPMGPAYLSDVVGIDTADHCTVVMEAGFPTRMKRDESSAIAKLAAAERYGQKNGKGFYVYGTDKKGKPTKEADPATYELLGCEQGKKLDADEVIARCMIPMVNEVVRCLEEDIVGSAAEADMALLYGLGFPPFRGGPFRYLETLGMDNFIQLADKYAHLGEIYQVTDGMREMAKAGKSYFDTTSAK.

Positions 1–188 are enoyl-CoA hydratase/isomerase; that stretch reads MIYQGESIRV…KVGAVDAVVE (188 aa). D295 is a binding site for substrate. The segment at 310–718 is 3-hydroxyacyl-CoA dehydrogenase; that stretch reads TKEIKTAGVL…KSYFDTTSAK (409 aa). Residues M324, D343, 400–402, K407, and S429 each bind NAD(+); that span reads VVE. The active-site For 3-hydroxyacyl-CoA dehydrogenase activity is the H450. N453 lines the NAD(+) pocket. Residues N500 and Y658 each coordinate substrate.

The protein in the N-terminal section; belongs to the enoyl-CoA hydratase/isomerase family. In the C-terminal section; belongs to the 3-hydroxyacyl-CoA dehydrogenase family. As to quaternary structure, heterotetramer of two alpha chains (FadB) and two beta chains (FadA).

It catalyses the reaction a (3S)-3-hydroxyacyl-CoA + NAD(+) = a 3-oxoacyl-CoA + NADH + H(+). It carries out the reaction a (3S)-3-hydroxyacyl-CoA = a (2E)-enoyl-CoA + H2O. The enzyme catalyses a 4-saturated-(3S)-3-hydroxyacyl-CoA = a (3E)-enoyl-CoA + H2O. The catalysed reaction is (3S)-3-hydroxybutanoyl-CoA = (3R)-3-hydroxybutanoyl-CoA. It catalyses the reaction a (3Z)-enoyl-CoA = a 4-saturated (2E)-enoyl-CoA. It carries out the reaction a (3E)-enoyl-CoA = a 4-saturated (2E)-enoyl-CoA. The protein operates within lipid metabolism; fatty acid beta-oxidation. Functionally, involved in the aerobic and anaerobic degradation of long-chain fatty acids via beta-oxidation cycle. Catalyzes the formation of 3-oxoacyl-CoA from enoyl-CoA via L-3-hydroxyacyl-CoA. It can also use D-3-hydroxyacyl-CoA and cis-3-enoyl-CoA as substrate. The chain is Fatty acid oxidation complex subunit alpha from Idiomarina loihiensis (strain ATCC BAA-735 / DSM 15497 / L2-TR).